The primary structure comprises 122 residues: Large ribosomal subunit protein uL18 (122 aa).

The protein belongs to the universal ribosomal protein uL18 family. As to quaternary structure, part of the 50S ribosomal subunit; part of the 5S rRNA/L5/L18/L25 subcomplex. Contacts the 5S and 23S rRNAs.

This is one of the proteins that bind and probably mediate the attachment of the 5S RNA into the large ribosomal subunit, where it forms part of the central protuberance. This is Large ribosomal subunit protein uL18 from Lachnoclostridium phytofermentans (strain ATCC 700394 / DSM 18823 / ISDg) (Clostridium phytofermentans).